The sequence spans 305 residues: Glyceraldehyde-3-phosphate dehydrogenase 2, cytosolic (305 aa).

The NAD(+) site is built by aspartate 3 and arginine 50. D-glyceraldehyde 3-phosphate contacts are provided by residues 121–123, threonine 152, 181–182, and arginine 204; these read SCT and TG. Cysteine 122 functions as the Nucleophile in the catalytic mechanism. Asparagine 286 lines the NAD(+) pocket.

Belongs to the glyceraldehyde-3-phosphate dehydrogenase family. As to quaternary structure, homotetramer.

It is found in the cytoplasm. The enzyme catalyses D-glyceraldehyde 3-phosphate + phosphate + NAD(+) = (2R)-3-phospho-glyceroyl phosphate + NADH + H(+). It participates in carbohydrate degradation; glycolysis; pyruvate from D-glyceraldehyde 3-phosphate: step 1/5. Functionally, key enzyme in glycolysis that catalyzes the first step of the pathway by converting D-glyceraldehyde 3-phosphate (G3P) into 3-phospho-D-glyceroyl phosphate. Essential for the maintenance of cellular ATP levels and carbohydrate metabolism. The sequence is that of Glyceraldehyde-3-phosphate dehydrogenase 2, cytosolic (GAPC) from Hordeum vulgare (Barley).